Reading from the N-terminus, the 394-residue chain is Phosphoglycerate kinase (394 aa).

Residues 21–23 (DFN), Arg-36, 59–62 (HFGR), Arg-118, and Arg-151 contribute to the substrate site. ATP-binding positions include Lys-201, Glu-323, and 349–352 (GGDS).

The protein belongs to the phosphoglycerate kinase family. In terms of assembly, monomer.

The protein resides in the cytoplasm. The catalysed reaction is (2R)-3-phosphoglycerate + ATP = (2R)-3-phospho-glyceroyl phosphate + ADP. It functions in the pathway carbohydrate degradation; glycolysis; pyruvate from D-glyceraldehyde 3-phosphate: step 2/5. This Brevibacillus brevis (strain 47 / JCM 6285 / NBRC 100599) protein is Phosphoglycerate kinase.